The primary structure comprises 383 residues: Nuclear hormone receptor family member nhr-217 (383 aa).

Positions 53-127 (IPACPVCDVP…AGLQRDYVRQ (75 aa)) form a DNA-binding region, nuclear receptor. 2 NR C4-type zinc fingers span residues 56-77 (CPVCDVPCRIEPHFGGIACAAC) and 93-109 (CKREKLCRKARKSCRAC). The NR LBD domain occupies 172-383 (ILKVSNSSLF…KLYVQIGIPF (212 aa)).

It belongs to the nuclear hormone receptor family.

The protein localises to the nucleus. Orphan nuclear receptor. This Caenorhabditis elegans protein is Nuclear hormone receptor family member nhr-217 (nhr-217).